We begin with the raw amino-acid sequence, 33 residues long: MLFTLAWASLAAVFSFSIAMVVWGRNGDGTLNF.

A helical transmembrane segment spans residues Leu2–Val22.

It belongs to the PetN family. In terms of assembly, the 4 large subunits of the cytochrome b6-f complex are cytochrome b6, subunit IV (17 kDa polypeptide, PetD), cytochrome f and the Rieske protein, while the 4 small subunits are PetG, PetL, PetM and PetN. The complex functions as a dimer.

It localises to the cellular thylakoid membrane. Component of the cytochrome b6-f complex, which mediates electron transfer between photosystem II (PSII) and photosystem I (PSI), cyclic electron flow around PSI, and state transitions. The polypeptide is Cytochrome b6-f complex subunit 8 (Synechococcus sp. (strain WH7803)).